Here is a 190-residue protein sequence, read N- to C-terminus: Cytidylate kinase (190 aa).

Residue 7-15 (GKIGSGKST) coordinates ATP.

It belongs to the cytidylate kinase family. Type 2 subfamily.

Its subcellular location is the cytoplasm. The catalysed reaction is CMP + ATP = CDP + ADP. The enzyme catalyses dCMP + ATP = dCDP + ADP. The chain is Cytidylate kinase from Thermoplasma volcanium (strain ATCC 51530 / DSM 4299 / JCM 9571 / NBRC 15438 / GSS1).